The chain runs to 465 residues: Probable Xaa-Pro aminopeptidase pepP (465 aa).

Residues D263, D274, E397, and E437 each contribute to the Mn(2+) site.

This sequence belongs to the peptidase M24B family. Requires Mn(2+) as cofactor.

It catalyses the reaction Release of any N-terminal amino acid, including proline, that is linked to proline, even from a dipeptide or tripeptide.. Functionally, catalyzes the removal of a penultimate prolyl residue from the N-termini of peptides. This Penicillium rubens (strain ATCC 28089 / DSM 1075 / NRRL 1951 / Wisconsin 54-1255) (Penicillium chrysogenum) protein is Probable Xaa-Pro aminopeptidase pepP (pepP).